The chain runs to 471 residues: FAD-dependent monooxygenase andE (471 aa).

3 residues coordinate FAD: glutamate 35, glycine 49, and arginine 108. Tyrosine 216 is a catalytic residue. FAD is bound by residues aspartate 308 and alanine 321. Transmembrane regions (helical) follow at residues 403 to 423 and 443 to 463; these read LANI…LPFP and TPFA…LLGL.

This sequence belongs to the paxM FAD-dependent monooxygenase family. FAD serves as cofactor.

The protein localises to the membrane. The protein operates within secondary metabolite biosynthesis; terpenoid biosynthesis. Functionally, FAD-dependent monooxygenase; part of the gene cluster that mediates the biosynthesis of anditomin, a fungal meroterpenoid. The first step of the pathway is the synthesis of 3,5-dimethylorsellinic acid (DMOA) by the polyketide synthase andM. DMOA is then converted to the phthalide compound 5,7-dihydroxy-4,6-dimethylphthalide (DHDMP) by the cytochrome P450 monooxygenase andK, which is further prenylated by the prenyltransferase andD to yield farnesyl-DHDMP. Further epoxidation by the FAD-dependent monooxygenase andE leads to epoxyfarnesyl-DHDMP. The next step involves the terpene cyclase andB that converts epoxyfarnesyl-DHDMP into preandiloid A through opening of the epoxide ring followed by the cyclization of the farnesyl moiety. Preandiloid A is in turn oxidized at the C-3 hydroxyl group to yield preandiloid B by the dehydrogenase andC. The dioxygenase andA is solely responsible for the dehydrogenation of preandiloid B leading to the enone preandiloid C, as well as for the intriguing structural rearrangement to generate the bicyclo[2.2.2]octane core, transforming preandiloid C into andiconin. FAD-binding monooxygenase andJ then produces andilesin D which is reduced by dehydrogenase andI to yield andilesin A. Action of acetyltransferase andG followed by a spontaneous acetate elimination leads then to andilesin B, which is in turn substrate of the short chain dehydrogenase andH to yield andilesin C. Finally, the dioxygenase andF catalyzes the transformation of andilesin C to anditomin. The sequence is that of FAD-dependent monooxygenase andE from Emericella variicolor (Aspergillus stellatus).